We begin with the raw amino-acid sequence, 370 residues long: Queuine tRNA-ribosyltransferase (370 aa).

The active-site Proton acceptor is Asp89. Substrate-binding positions include 89–93 (DSGGF), Asp143, Gln185, and Gly212. Residues 243-249 (GVGTPED) form an RNA binding region. The active-site Nucleophile is Asp262. The interval 267–271 (TRNAR) is RNA binding; important for wobble base 34 recognition. Residues Cys300, Cys302, Cys305, and His331 each contribute to the Zn(2+) site.

It belongs to the queuine tRNA-ribosyltransferase family. Homodimer. Within each dimer, one monomer is responsible for RNA recognition and catalysis, while the other monomer binds to the replacement base PreQ1. Requires Zn(2+) as cofactor.

The catalysed reaction is 7-aminomethyl-7-carbaguanine + guanosine(34) in tRNA = 7-aminomethyl-7-carbaguanosine(34) in tRNA + guanine. It participates in tRNA modification; tRNA-queuosine biosynthesis. Catalyzes the base-exchange of a guanine (G) residue with the queuine precursor 7-aminomethyl-7-deazaguanine (PreQ1) at position 34 (anticodon wobble position) in tRNAs with GU(N) anticodons (tRNA-Asp, -Asn, -His and -Tyr). Catalysis occurs through a double-displacement mechanism. The nucleophile active site attacks the C1' of nucleotide 34 to detach the guanine base from the RNA, forming a covalent enzyme-RNA intermediate. The proton acceptor active site deprotonates the incoming PreQ1, allowing a nucleophilic attack on the C1' of the ribose to form the product. After dissociation, two additional enzymatic reactions on the tRNA convert PreQ1 to queuine (Q), resulting in the hypermodified nucleoside queuosine (7-(((4,5-cis-dihydroxy-2-cyclopenten-1-yl)amino)methyl)-7-deazaguanosine). This chain is Queuine tRNA-ribosyltransferase, found in Methylobacillus flagellatus (strain ATCC 51484 / DSM 6875 / VKM B-1610 / KT).